We begin with the raw amino-acid sequence, 76 residues long: Large ribosomal subunit protein uL29 (76 aa).

The protein belongs to the universal ribosomal protein uL29 family.

The chain is Large ribosomal subunit protein uL29 from Corynebacterium diphtheriae (strain ATCC 700971 / NCTC 13129 / Biotype gravis).